The following is a 174-amino-acid chain: Secreted protein A (174 aa).

An N-terminal signal peptide occupies residues 1–19; it reads MRLLITLFAIFALFNCSLA. Asn156 is a glycosylation site (N-linked (GlcNAc...) asparagine).

The protein belongs to the Sct family. Post-translationally, probably contains disulfide bonds.

It is found in the secreted. It localises to the extracellular vesicle. The chain is Secreted protein A (p17) from Dictyostelium discoideum (Social amoeba).